Here is a 427-residue protein sequence, read N- to C-terminus: Enolase (427 aa).

Glutamine 163 provides a ligand contact to (2R)-2-phosphoglycerate. Glutamate 205 functions as the Proton donor in the catalytic mechanism. Mg(2+) is bound by residues aspartate 242, glutamate 285, and aspartate 312. Positions 337, 366, 367, and 388 each coordinate (2R)-2-phosphoglycerate. The active-site Proton acceptor is the lysine 337.

This sequence belongs to the enolase family. Mg(2+) serves as cofactor.

Its subcellular location is the cytoplasm. The protein localises to the secreted. The protein resides in the cell surface. It catalyses the reaction (2R)-2-phosphoglycerate = phosphoenolpyruvate + H2O. The protein operates within carbohydrate degradation; glycolysis; pyruvate from D-glyceraldehyde 3-phosphate: step 4/5. Functionally, catalyzes the reversible conversion of 2-phosphoglycerate (2-PG) into phosphoenolpyruvate (PEP). It is essential for the degradation of carbohydrates via glycolysis. This Rhodopseudomonas palustris (strain HaA2) protein is Enolase.